The sequence spans 343 residues: Heat-inducible transcription repressor HrcA (343 aa).

It belongs to the HrcA family.

In terms of biological role, negative regulator of class I heat shock genes (grpE-dnaK-dnaJ and groELS operons). Prevents heat-shock induction of these operons. The protein is Heat-inducible transcription repressor HrcA of Clostridium botulinum (strain Eklund 17B / Type B).